A 338-amino-acid polypeptide reads, in one-letter code: Sesquiterpene synthase 2 (338 aa).

Residues D93, N228, S232, and E236 each contribute to the Mg(2+) site. A DDXXD motif motif is present at residues 93-97 (DNISD). An NSE/DTE motif motif is present at residues 228–236 (NDIFSYNVE). (2E,6E)-farnesyl diphosphate contacts are provided by R316 and Y317.

It belongs to the terpene synthase family. Requires Mg(2+) as cofactor.

The enzyme catalyses (2E,6E)-farnesyl diphosphate = alpha-copaene + diphosphate. It catalyses the reaction (2E,6E)-farnesyl diphosphate = beta-copaene + diphosphate. It carries out the reaction (2E,6E)-farnesyl diphosphate = alpha-muurolene + diphosphate. The catalysed reaction is (2E,6E)-farnesyl diphosphate = gamma-muurolene + diphosphate. The enzyme catalyses (2E,6E)-farnesyl diphosphate = delta-cadinene + diphosphate. Terpene cyclase that catalyzes the cyclization of farnesyl diphosphate (FPP) to various sesquiterpenes, including alpha-copaene, beta-copaene, beta-elemene, alpha-muurolene, gamma-muurolene and delta-cadinene. The polypeptide is Sesquiterpene synthase 2 (Postia placenta (strain ATCC 44394 / Madison 698-R) (Brown rot fungus)).